A 169-amino-acid chain; its full sequence is Neudesin (169 aa).

Residues 1-28 (MAGPAPGRRLVALALIVALAVGLPTAGA) form the signal peptide. The region spanning 41–126 (VRLFTEEELA…EELESLDDVF (86 aa)) is the Cytochrome b5 heme-binding domain. Position 133 is an N6-acetyllysine (lysine 133). The disordered stretch occupies residues 148 to 169 (DGSPNLDFKPEDQPHFDIKDEF). The span at 155–169 (FKPEDQPHFDIKDEF) shows a compositional bias: basic and acidic residues.

This sequence belongs to the cytochrome b5 family. MAPR subfamily. As to quaternary structure, interacts with PINK1 and PARK7.

The protein localises to the secreted. The protein resides in the extracellular space. It is found in the mitochondrion. It localises to the endoplasmic reticulum. Acts as a neurotrophic factor in postnatal mature neurons enhancing neuronal survival. Promotes cell proliferation and neurogenesis in undifferentiated neural progenitor cells at the embryonic stage and inhibits differentiation of astrocytes. Its neurotrophic activity is exerted via MAPK1/ERK2, MAPK3/ERK1 and AKT1/AKT pathways. Neurotrophic activity is enhanced by binding to heme. Also acts as an anorexigenic neurotrophic factor that contributes to energy balance. The polypeptide is Neudesin (NENF) (Bos taurus (Bovine)).